Consider the following 224-residue polypeptide: MIAIIKFPGTTCETDVYKALIEAGVPTVIVKYKDFDPDRYNGVILPGGFSFGDYLRAGSIAASTETMKKVKQMAEDGKIVIGICNGFQILVESGLLKGALLPNLKLRFISKWVYLKVIRADTILTKGLDKKIIRMPIAHAEGRYYVDDIDYAKTHMVLQYCDENGNISEDVNPNGSLLNIASIANEEGNVIGMMPHPERASFKLTSIDGTVDGLILLRRLGEWA.

A Glutamine amidotransferase type-1 domain is found at 1–224 (MIAIIKFPGT…ILLRRLGEWA (224 aa)). Catalysis depends on Cys-84, which acts as the Nucleophile. Residues His-196 and Glu-198 contribute to the active site.

As to quaternary structure, part of the FGAM synthase complex composed of 1 PurL, 1 PurQ and 2 PurS subunits.

The protein localises to the cytoplasm. It carries out the reaction N(2)-formyl-N(1)-(5-phospho-beta-D-ribosyl)glycinamide + L-glutamine + ATP + H2O = 2-formamido-N(1)-(5-O-phospho-beta-D-ribosyl)acetamidine + L-glutamate + ADP + phosphate + H(+). The catalysed reaction is L-glutamine + H2O = L-glutamate + NH4(+). The protein operates within purine metabolism; IMP biosynthesis via de novo pathway; 5-amino-1-(5-phospho-D-ribosyl)imidazole from N(2)-formyl-N(1)-(5-phospho-D-ribosyl)glycinamide: step 1/2. Part of the phosphoribosylformylglycinamidine synthase complex involved in the purines biosynthetic pathway. Catalyzes the ATP-dependent conversion of formylglycinamide ribonucleotide (FGAR) and glutamine to yield formylglycinamidine ribonucleotide (FGAM) and glutamate. The FGAM synthase complex is composed of three subunits. PurQ produces an ammonia molecule by converting glutamine to glutamate. PurL transfers the ammonia molecule to FGAR to form FGAM in an ATP-dependent manner. PurS interacts with PurQ and PurL and is thought to assist in the transfer of the ammonia molecule from PurQ to PurL. In Saccharolobus solfataricus (strain ATCC 35092 / DSM 1617 / JCM 11322 / P2) (Sulfolobus solfataricus), this protein is Phosphoribosylformylglycinamidine synthase subunit PurQ.